The chain runs to 123 residues: Large ribosomal subunit protein uL14 (123 aa).

It belongs to the universal ribosomal protein uL14 family. In terms of assembly, part of the 50S ribosomal subunit. Forms a cluster with proteins L3 and L19. In the 70S ribosome, L14 and L19 interact and together make contacts with the 16S rRNA in bridges B5 and B8.

In terms of biological role, binds to 23S rRNA. Forms part of two intersubunit bridges in the 70S ribosome. This chain is Large ribosomal subunit protein uL14, found in Tropheryma whipplei (strain TW08/27) (Whipple's bacillus).